The sequence spans 261 residues: MANLSSDFQTFTMDDPIRQLAELSNTLHHFQTFPPPFSSSLDSLFFHNQFPDHFPGKSLENNFHQGIFFPSNIQNNEESSSQFDTKKRKSLMEAVSTSENSVSDQTLSTSSAQVSINGNISTKNNSSRRGKRSKNREEEKEREVVHVRARRGQATDSHSIAERVRRGKINERLKCLQDIVPGCYKTMGMATMLDEIINYVQSLQNQVEFLSMKLTAASSYYDFNSETDAVESMQKAKAREAVEMGQGRDGSSVFHSSSWTL.

Low complexity predominate over residues 72–82; sequence NIQNNEESSSQ. Disordered stretches follow at residues 72–158 and 242–261; these read NIQN…TDSH and VEMGQGRDGSSVFHSSSWTL. A compositionally biased stretch (polar residues) spans 95-123; sequence VSTSENSVSDQTLSTSSAQVSINGNISTK. Positions 135–146 are enriched in basic and acidic residues; the sequence is NREEEKEREVVH. Residues 153–203 enclose the bHLH domain; it reads QATDSHSIAERVRRGKINERLKCLQDIVPGCYKTMGMATMLDEIINYVQSL.

Homodimer. Expressed in stems.

The protein resides in the nucleus. Positive regulator of brassinosteroid signaling. The sequence is that of Transcription factor BEE 3 (BEE3) from Arabidopsis thaliana (Mouse-ear cress).